Reading from the N-terminus, the 82-residue chain is MPKRTLQGVVVSDKQAKTVVVRVDRRFTHPIYKKTIRRSKNYHAHDESNEFKPGDMVWIEESKPISKLKRWTVVRGEHKKTA.

Belongs to the universal ribosomal protein uS17 family. Part of the 30S ribosomal subunit.

One of the primary rRNA binding proteins, it binds specifically to the 5'-end of 16S ribosomal RNA. This Bradyrhizobium sp. (strain BTAi1 / ATCC BAA-1182) protein is Small ribosomal subunit protein uS17.